The following is a 296-amino-acid chain: Glycine--tRNA ligase alpha subunit (296 aa).

This sequence belongs to the class-II aminoacyl-tRNA synthetase family. As to quaternary structure, tetramer of two alpha and two beta subunits.

The protein localises to the cytoplasm. It carries out the reaction tRNA(Gly) + glycine + ATP = glycyl-tRNA(Gly) + AMP + diphosphate. In Francisella tularensis subsp. holarctica (strain FTNF002-00 / FTA), this protein is Glycine--tRNA ligase alpha subunit.